Reading from the N-terminus, the 164-residue chain is CDP-archaeol synthase (164 aa).

4 helical membrane-spanning segments follow: residues 3–23, 51–71, 77–97, and 122–142; these read LLYFFLLIWPPYVANGSAVLA, YEGFLIGLSTGTFIGYAPNLL, LLDAFVLSIAALLGDLFGAFI, and LAVYTLYKDISVEYIIAAVII.

Belongs to the CDP-archaeol synthase family. Mg(2+) is required as a cofactor.

Its subcellular location is the cell membrane. The catalysed reaction is 2,3-bis-O-(geranylgeranyl)-sn-glycerol 1-phosphate + CTP + H(+) = CDP-2,3-bis-O-(geranylgeranyl)-sn-glycerol + diphosphate. Its pathway is membrane lipid metabolism; glycerophospholipid metabolism. Functionally, catalyzes the formation of CDP-2,3-bis-(O-geranylgeranyl)-sn-glycerol (CDP-archaeol) from 2,3-bis-(O-geranylgeranyl)-sn-glycerol 1-phosphate (DGGGP) and CTP. This reaction is the third ether-bond-formation step in the biosynthesis of archaeal membrane lipids. The polypeptide is CDP-archaeol synthase (Pyrobaculum islandicum (strain DSM 4184 / JCM 9189 / GEO3)).